The sequence spans 188 residues: Protein-export protein SecB (188 aa).

Disordered stretches follow at residues 1–21 (MADE…EQPK) and 160–188 (RQKA…DTQQ). The segment covering 176-188 (SDSTAAQGSDTQQ) has biased composition (polar residues).

The protein belongs to the SecB family. In terms of assembly, homotetramer, a dimer of dimers. One homotetramer interacts with 1 SecA dimer.

Its subcellular location is the cytoplasm. In terms of biological role, one of the proteins required for the normal export of preproteins out of the cell cytoplasm. It is a molecular chaperone that binds to a subset of precursor proteins, maintaining them in a translocation-competent state. It also specifically binds to its receptor SecA. This chain is Protein-export protein SecB, found in Alkalilimnicola ehrlichii (strain ATCC BAA-1101 / DSM 17681 / MLHE-1).